The primary structure comprises 343 residues: Diterpene cyclase DtcycB (343 aa).

Positions 219, 223, and 227 each coordinate Mg(2+).

This sequence belongs to the terpene synthase family. Homodimer. Mg(2+) is required as a cofactor.

It catalyses the reaction (2E,6E,10E)-geranylgeranyl diphosphate + H2O = (R)-nephthenol + diphosphate. The enzyme catalyses (2E,6E,10E)-geranylgeranyl diphosphate = (R)-cembrene A + diphosphate. The catalysed reaction is (2E,6E,10E)-geranylgeranyl diphosphate + H2O = (1S,4E,8E,12E)-2,2,5,9,13-pentamethylcyclopentadeca-4,8,12-trien-1-ol + diphosphate. Its function is as follows. Diterpene cyclases that can form multiple diterpene products. The sequence is that of Diterpene cyclase DtcycB from Streptomyces sp.